The primary structure comprises 767 residues: MYPQGRHPTPLQSGQPFKFSVLEICDRIKEEFQFLQAQYHSLKLECEKLASEKTEMQRHYVMAAPHQCPQGGTSYPHWPRLSPLQYYEMSYGLNIEMHKQAEIVKRLSAICAQMVPFLTQEHQQQVLQAVDRAKQVTVGELNSLLGQQNQLQPLSHAPPVPLTPRPAGLVGAGATGLLALSGALAAQAQLVAAVKEDRVGVDAEGSRVDRAASRSSSPSPPESLVEEDHPSSRGGSGKQQRAEDKDLSGPYDSEEDKSDYNLVVDEDQPSEPPSPVTTPCGKAPLCIPARRDLTDSPASLASSLGSPLPRSKDIALNDLPTGTPASRSCGTSPPQDSSTPGPSSASHLCQLAAQPAAPTDSIALRSPLTLSSPFTSSFSLGSHSTLNGDLSMPGSYVGLHLSPQVSSSVVYGRSPLQMAFESHPHLRGSSVSLPGIPVAKPAYSFHVSADGQMQPVPFPSDALVGTGIPRHARQLHTLAHGEVVCAVTISSSTQHVYTGGKGCVKVWDVGQPGSKTPVAQLDCLNRDNYIRSCKLLPDGQSLIVGGEASTLSIWDLAAPTPRIKAELTSSAPACYALAVSPDAKVCFSCCSDGNIVVWDLQNQAMVRQFQGHTDGASCIDISDYGTRLWTGGLDNTVRCWDLREGRQLQQHDFSSQIFSLGHCPNQDWLAVGMESSHVEVLHVRKPEKYQLRLHESCVLSLKFASCGRWFVSTGKDNLLNAWRTPYGASIFQSKESSSVLSCDISRNNKYIVTGSGDKKATVYEVVY.

A q domain region spans residues 1–152 (MYPQGRHPTP…SLLGQQNQLQ (152 aa)). Residues 153-215 (PLSHAPPVPL…SRVDRAASRS (63 aa)) are GP domain. The span at 198–212 (RVGVDAEGSRVDRAA) shows a compositional bias: basic and acidic residues. 3 disordered regions span residues 198-257 (RVGV…EEDK), 264-283 (VDEDQPSEPPSPVTTPCGKA), and 296-346 (SPAS…SSAS). Residues 216 to 279 (SSPSPPESLV…SEPPSPVTTP (64 aa)) are ccN domain. The Nuclear localization signal motif lies at 238 to 242 (KQQRA). At Ser253 the chain carries Phosphoserine; by CK2. Ser274 is modified (phosphoserine; by CDK1). Thr278 bears the Phosphothreonine; by CDK1 mark. The interval 280–447 (CGKAPLCIPA…VAKPAYSFHV (168 aa)) is SP domain. The segment covering 296 to 309 (SPASLASSLGSPLP) has biased composition (low complexity). The residue at position 306 (Ser306) is a Phosphoserine. Residues 323-346 (TPASRSCGTSPPQDSSTPGPSSAS) are compositionally biased toward polar residues. 6 WD repeats span residues 479–517 (AHGEVVCAVTISSSTQHVYTGGKGCVKVWDVGQPGSKTP), 525–564 (NRDNYIRSCKLLPDGQSLIVGGEASTLSIWDLAAPTPRIK), 569–608 (SSAPACYALAVSPDAKVCFSCCSDGNIVVWDLQNQAMVRQ), 611–650 (GHTDGASCIDISDYGTRLWTGGLDNTVRCWDLREGRQLQQ), 693–732 (LHESCVLSLKFASCGRWFVSTGKDNLLNAWRTPYGASIFQ), and 734–766 (KESSSVLSCDISRNNKYIVTGSGDKKATVYEVV).

It belongs to the WD repeat Groucho/TLE family. In terms of assembly, homooligomer and heterooligomer with other family members. Binds LEF1, TCF7, TCF7L1, TCF7L2, UTY, HES1 and HES5. In terms of processing, ubiquitinated by XIAP/BIRC4. Expressed in bone marrow-derived macrophages.

The protein resides in the nucleus. Transcriptional corepressor that binds to a number of transcription factors. Inhibits the transcriptional activation mediated by CTNNB1 and TCF family members in Wnt signaling. The effects of full-length TLE family members may be modulated by association with dominant-negative AES. This Mus musculus (Mouse) protein is Transducin-like enhancer protein 2 (Tle2).